The chain runs to 211 residues: Proteasome subunit beta (211 aa).

The propeptide at 1 to 9 is removed in mature form; by autocatalysis; the sequence is MDNDKYLKG. Threonine 10 serves as the catalytic Nucleophile.

The protein belongs to the peptidase T1B family. As to quaternary structure, the 20S proteasome core is composed of 14 alpha and 14 beta subunits that assemble into four stacked heptameric rings, resulting in a barrel-shaped structure. The two inner rings, each composed of seven catalytic beta subunits, are sandwiched by two outer rings, each composed of seven alpha subunits. The catalytic chamber with the active sites is on the inside of the barrel. Has a gated structure, the ends of the cylinder being occluded by the N-termini of the alpha-subunits. Is capped at one or both ends by the proteasome regulatory ATPase, PAN.

It is found in the cytoplasm. It carries out the reaction Cleavage of peptide bonds with very broad specificity.. Its activity is regulated as follows. The formation of the proteasomal ATPase PAN-20S proteasome complex, via the docking of the C-termini of PAN into the intersubunit pockets in the alpha-rings, triggers opening of the gate for substrate entry. Interconversion between the open-gate and close-gate conformations leads to a dynamic regulation of the 20S proteasome proteolysis activity. Component of the proteasome core, a large protease complex with broad specificity involved in protein degradation. This chain is Proteasome subunit beta, found in Methanosarcina barkeri (strain Fusaro / DSM 804).